The primary structure comprises 225 residues: MNLTYKVHPIKTRYQGWTNYCYIIEDIVSRSAIVVDPSWELSKITTTLSELEAELKAVALTHSHYDHVNLVDPLTKMFNAQVYMSKKEIDYYQFRCRNLISLDDHQTISIGNTRAQCLLTPGHTAGGMCYLFSESIFTGDTVFTEGCGICEDDGSSAEEMFDSIQRIKSEVSPHVRVYPGHSFGKSPGHSIKDLYQHNIYFQIDKKEYFVKFRTRKNQKGIFDFK.

Zn(2+)-binding residues include H62, H64, D66, H67, H123, D140, and H181.

It belongs to the metallo-beta-lactamase superfamily. It depends on Zn(2+) as a cofactor.

The protein localises to the cytoplasm. The protein operates within antibiotic biosynthesis; bacillaene biosynthesis. In terms of biological role, probably involved in some intermediate steps for the synthesis of the antibiotic polyketide bacillaene which is involved in secondary metabolism. This chain is Probable polyketide biosynthesis zinc-dependent hydrolase PksB (pksB), found in Bacillus subtilis (strain 168).